The following is a 420-amino-acid chain: Glucose-1-phosphate adenylyltransferase (420 aa).

Residues Tyr107, Gly172, 187-188, and Ser205 contribute to the alpha-D-glucose 1-phosphate site; that span reads EK.

Belongs to the bacterial/plant glucose-1-phosphate adenylyltransferase family. As to quaternary structure, homotetramer.

The catalysed reaction is alpha-D-glucose 1-phosphate + ATP + H(+) = ADP-alpha-D-glucose + diphosphate. The protein operates within glycan biosynthesis; glycogen biosynthesis. Involved in the biosynthesis of ADP-glucose, a building block required for the elongation reactions to produce glycogen. Catalyzes the reaction between ATP and alpha-D-glucose 1-phosphate (G1P) to produce pyrophosphate and ADP-Glc. This is Glucose-1-phosphate adenylyltransferase from Rhizobium johnstonii (strain DSM 114642 / LMG 32736 / 3841) (Rhizobium leguminosarum bv. viciae).